Here is a 135-residue protein sequence, read N- to C-terminus: L-alanine exporter AlaE (135 aa).

Transmembrane regions (helical) follow at residues 9–29, 75–95, and 96–116; these read VATV…IAGM, DILA…LIAG, and ASFA…ILLA.

The protein belongs to the AlaE exporter family.

The protein localises to the cell inner membrane. Exports L-alanine. The chain is L-alanine exporter AlaE from Cereibacter sphaeroides (strain ATCC 17023 / DSM 158 / JCM 6121 / CCUG 31486 / LMG 2827 / NBRC 12203 / NCIMB 8253 / ATH 2.4.1.) (Rhodobacter sphaeroides).